We begin with the raw amino-acid sequence, 232 residues long: Phosphatidylserine decarboxylase proenzyme (232 aa).

Serine 190 acts as the Schiff-base intermediate with substrate; via pyruvic acid in catalysis. Serine 190 carries the pyruvic acid (Ser); by autocatalysis modification.

The protein belongs to the phosphatidylserine decarboxylase family. PSD-A subfamily. In terms of assembly, heterodimer of a large membrane-associated beta subunit and a small pyruvoyl-containing alpha subunit. The cofactor is pyruvate. Post-translationally, is synthesized initially as an inactive proenzyme. Formation of the active enzyme involves a self-maturation process in which the active site pyruvoyl group is generated from an internal serine residue via an autocatalytic post-translational modification. Two non-identical subunits are generated from the proenzyme in this reaction, and the pyruvate is formed at the N-terminus of the alpha chain, which is derived from the carboxyl end of the proenzyme. The post-translation cleavage follows an unusual pathway, termed non-hydrolytic serinolysis, in which the side chain hydroxyl group of the serine supplies its oxygen atom to form the C-terminus of the beta chain, while the remainder of the serine residue undergoes an oxidative deamination to produce ammonia and the pyruvoyl prosthetic group on the alpha chain.

It localises to the cell membrane. The catalysed reaction is a 1,2-diacyl-sn-glycero-3-phospho-L-serine + H(+) = a 1,2-diacyl-sn-glycero-3-phosphoethanolamine + CO2. It participates in phospholipid metabolism; phosphatidylethanolamine biosynthesis; phosphatidylethanolamine from CDP-diacylglycerol: step 2/2. Functionally, catalyzes the formation of phosphatidylethanolamine (PtdEtn) from phosphatidylserine (PtdSer). The protein is Phosphatidylserine decarboxylase proenzyme of Bradyrhizobium diazoefficiens (strain JCM 10833 / BCRC 13528 / IAM 13628 / NBRC 14792 / USDA 110).